A 764-amino-acid chain; its full sequence is 5-methyltetrahydropteroyltriglutamate--homocysteine methyltransferase (764 aa).

5-methyltetrahydropteroyltri-L-glutamate contacts are provided by residues 16 to 19 (RELK) and Lys117. Residues 442–444 (IGS) and Glu495 contribute to the L-homocysteine site. Residues 442-444 (IGS) and Glu495 contribute to the L-methionine site. Residues 526–527 (RC) and Trp572 each bind 5-methyltetrahydropteroyltri-L-glutamate. L-homocysteine is bound at residue Asp610. Asp610 contributes to the L-methionine binding site. Glu616 lines the 5-methyltetrahydropteroyltri-L-glutamate pocket. Residues His652, Cys654, and Glu676 each coordinate Zn(2+). His705 acts as the Proton donor in catalysis. Cys737 provides a ligand contact to Zn(2+).

This sequence belongs to the vitamin-B12 independent methionine synthase family. It depends on Zn(2+) as a cofactor.

The catalysed reaction is 5-methyltetrahydropteroyltri-L-glutamate + L-homocysteine = tetrahydropteroyltri-L-glutamate + L-methionine. It participates in amino-acid biosynthesis; L-methionine biosynthesis via de novo pathway; L-methionine from L-homocysteine (MetE route): step 1/1. Functionally, catalyzes the transfer of a methyl group from 5-methyltetrahydrofolate to homocysteine resulting in methionine formation. In Bordetella petrii (strain ATCC BAA-461 / DSM 12804 / CCUG 43448), this protein is 5-methyltetrahydropteroyltriglutamate--homocysteine methyltransferase.